The primary structure comprises 483 residues: Regulatory protein ViaA (483 aa).

Belongs to the ViaA family. Homodimer. Interacts with RavA.

Its subcellular location is the cytoplasm. Functionally, component of the RavA-ViaA chaperone complex, which may act on the membrane to optimize the function of some of the respiratory chains. ViaA stimulates the ATPase activity of RavA. In Salmonella schwarzengrund (strain CVM19633), this protein is Regulatory protein ViaA.